The sequence spans 286 residues: Deleted in azoospermia-like-B (286 aa).

The RRM domain occupies 33–114 (NTVFVGGIDI…PAIRKICTYV (82 aa)). The DAZ domain occupies 155–180 (ACPYPSSPPMAIQQIPVGCQQPGYFQ).

It belongs to the RRM DAZ family. In terms of assembly, interacts with the C-terminus of pabp1 and with epabp. Prior to oocyte maturation, found in a complex with epabp and pum2 proteins and spdy1 mRNA; pum2 dissociates from the complex during maturation.

The protein resides in the cytoplasm. In terms of biological role, RNA-binding protein that is required for primordial germ cell (PGC) differentiation and indirectly necessary for the migration of PGCs through the endoderm. May promote meiotic cell division during spermatogenesis. Shows a preference for G- and U-rich RNAs and probably binds the 3'-UTR of target mRNAs. Stimulates the initiation of translation of mRNAs through the recruitment of poly(A)-binding proteins (PABPs). This Xenopus laevis (African clawed frog) protein is Deleted in azoospermia-like-B (dazl-b).